The primary structure comprises 185 residues: Probable chorismate pyruvate-lyase (185 aa).

3 residues coordinate substrate: R80, L118, and E170.

This sequence belongs to the UbiC family.

It is found in the cytoplasm. The enzyme catalyses chorismate = 4-hydroxybenzoate + pyruvate. It functions in the pathway cofactor biosynthesis; ubiquinone biosynthesis. In terms of biological role, removes the pyruvyl group from chorismate, with concomitant aromatization of the ring, to provide 4-hydroxybenzoate (4HB) for the ubiquinone pathway. This chain is Probable chorismate pyruvate-lyase, found in Pseudomonas putida (strain ATCC 47054 / DSM 6125 / CFBP 8728 / NCIMB 11950 / KT2440).